The chain runs to 819 residues: Myosin light chain kinase 3 (819 aa).

Disordered regions lie at residues 146–256 (VPWR…TPSE), 273–334 (VVSP…TPPR), and 347–462 (EMLM…EQDC). S152 is modified (phosphoserine). Basic and acidic residues-rich tracts occupy residues 158–170 (EENK…EGGK) and 183–196 (DARE…KADV). Positions 307–318 (GPGPQCPGPPGL) are enriched in pro residues. Residues S355, S401, and S408 each carry the phosphoserine modification. Positions 515–770 (VCQHEVLGGG…ATQCLKHEWL (256 aa)) constitute a Protein kinase domain. Residues 521-529 (LGGGRFGQV) and K544 each bind ATP. D636 serves as the catalytic Proton acceptor.

It belongs to the protein kinase superfamily. CAMK Ser/Thr protein kinase family. Requires Mg(2+) as cofactor. Post-translationally, phosphorylated on serine residues. In terms of tissue distribution, restricted to heart.

The protein resides in the cytoplasm. It catalyses the reaction L-seryl-[myosin light chain] + ATP = O-phospho-L-seryl-[myosin light chain] + ADP + H(+). The enzyme catalyses L-threonyl-[myosin light chain] + ATP = O-phospho-L-threonyl-[myosin light chain] + ADP + H(+). Its function is as follows. Kinase that phosphorylates MYL2 in vitro. Promotes sarcomere formation in cardiomyocytes and increases cardiomyocyte contractility. This Homo sapiens (Human) protein is Myosin light chain kinase 3 (MYLK3).